The primary structure comprises 428 residues: 3-phosphoshikimate 1-carboxyvinyltransferase (428 aa).

3-phosphoshikimate-binding residues include Lys20, Ser21, and Arg25. Lys20 contributes to the phosphoenolpyruvate binding site. Residues Gly92 and Arg120 each coordinate phosphoenolpyruvate. 3-phosphoshikimate is bound by residues Ser166, Gln168, Asp314, and Lys341. Residue Gln168 coordinates phosphoenolpyruvate. The Proton acceptor role is filled by Asp314. Residues Arg345 and Arg387 each contribute to the phosphoenolpyruvate site.

It belongs to the EPSP synthase family. Monomer.

Its subcellular location is the cytoplasm. The enzyme catalyses 3-phosphoshikimate + phosphoenolpyruvate = 5-O-(1-carboxyvinyl)-3-phosphoshikimate + phosphate. Its pathway is metabolic intermediate biosynthesis; chorismate biosynthesis; chorismate from D-erythrose 4-phosphate and phosphoenolpyruvate: step 6/7. Catalyzes the transfer of the enolpyruvyl moiety of phosphoenolpyruvate (PEP) to the 5-hydroxyl of shikimate-3-phosphate (S3P) to produce enolpyruvyl shikimate-3-phosphate and inorganic phosphate. The polypeptide is 3-phosphoshikimate 1-carboxyvinyltransferase (Listeria welshimeri serovar 6b (strain ATCC 35897 / DSM 20650 / CCUG 15529 / CIP 8149 / NCTC 11857 / SLCC 5334 / V8)).